Consider the following 202-residue polypeptide: GMP synthase [glutamine-hydrolyzing] subunit A (202 aa).

The Glutamine amidotransferase type-1 domain maps to 4-194 (KIYVVDNGGQ…IAICQQHKEK (191 aa)). Residue C81 is the Nucleophile of the active site. Active-site residues include H168 and E170.

Heterodimer composed of a glutamine amidotransferase subunit (A) and a GMP-binding subunit (B).

It carries out the reaction XMP + L-glutamine + ATP + H2O = GMP + L-glutamate + AMP + diphosphate + 2 H(+). The protein operates within purine metabolism; GMP biosynthesis; GMP from XMP (L-Gln route): step 1/1. Catalyzes the synthesis of GMP from XMP. This chain is GMP synthase [glutamine-hydrolyzing] subunit A, found in Thermoplasma volcanium (strain ATCC 51530 / DSM 4299 / JCM 9571 / NBRC 15438 / GSS1).